The following is a 467-amino-acid chain: Argininosuccinate lyase 1 (467 aa).

This sequence belongs to the lyase 1 family. Argininosuccinate lyase subfamily.

The protein localises to the cytoplasm. The catalysed reaction is 2-(N(omega)-L-arginino)succinate = fumarate + L-arginine. Its pathway is amino-acid biosynthesis; L-arginine biosynthesis; L-arginine from L-ornithine and carbamoyl phosphate: step 3/3. The sequence is that of Argininosuccinate lyase 1 from Rhizobium meliloti (strain 1021) (Ensifer meliloti).